A 661-amino-acid chain; its full sequence is uncharacterized protein (661 aa).

Residues 25–52 (LLPSEPPVGDMNNEDSDTNTSITQSPTN) form a disordered region. Residues 42–52 (TNTSITQSPTN) show a composition bias toward polar residues. In terms of domain architecture, SANT spans 246-297 (SMPDIWNEEQHSIFVQQFILHGKKFGKIAEAVPGKNSKECVLHYYLTKRTTD). Disordered regions lie at residues 306–329 (TKTKGRRRKKLLPSQRGGKKKSKG), 478–499 (YYEPKLEQHSSSKRNSISTRKE), 548–570 (PMKMPLTPRRASTGPRPRPTFQL), and 604–633 (RIDELSVEDQEHTTHSSHTTSDINAFPNSQ). Basic residues predominate over residues 308-328 (TKGRRRKKLLPSQRGGKKKSK). Residues 478 to 487 (YYEPKLEQHS) are compositionally biased toward basic and acidic residues. Over residues 604-617 (RIDELSVEDQEHTT) the composition is skewed to basic and acidic residues.

It is found in the nucleus. This is an uncharacterized protein from Schizosaccharomyces pombe (strain 972 / ATCC 24843) (Fission yeast).